A 342-amino-acid polypeptide reads, in one-letter code: Flagellar P-ring protein (342 aa).

The first 19 residues, 1 to 19, serve as a signal peptide directing secretion; sequence MKRVFLWLIFVLAFHKLLA.

It belongs to the FlgI family. The basal body constitutes a major portion of the flagellar organelle and consists of four rings (L,P,S, and M) mounted on a central rod.

It localises to the periplasm. The protein resides in the bacterial flagellum basal body. Functionally, assembles around the rod to form the L-ring and probably protects the motor/basal body from shearing forces during rotation. The sequence is that of Flagellar P-ring protein from Helicobacter pylori (strain P12).